A 248-amino-acid chain; its full sequence is 2,3-bisphosphoglycerate-dependent phosphoglycerate mutase (248 aa).

Substrate-binding positions include 8–15 (RHGESTWN), 21–22 (TG), arginine 60, 87–90 (ERHY), lysine 98, 114–115 (RR), and 183–184 (GN). Histidine 9 serves as the catalytic Tele-phosphohistidine intermediate. Glutamate 87 functions as the Proton donor/acceptor in the catalytic mechanism.

Belongs to the phosphoglycerate mutase family. BPG-dependent PGAM subfamily. Homodimer.

The catalysed reaction is (2R)-2-phosphoglycerate = (2R)-3-phosphoglycerate. The protein operates within carbohydrate degradation; glycolysis; pyruvate from D-glyceraldehyde 3-phosphate: step 3/5. Catalyzes the interconversion of 2-phosphoglycerate and 3-phosphoglycerate. The protein is 2,3-bisphosphoglycerate-dependent phosphoglycerate mutase of Burkholderia orbicola (strain MC0-3).